The following is a 360-amino-acid chain: Histidinol-phosphate aminotransferase (360 aa).

Lys221 bears the N6-(pyridoxal phosphate)lysine mark.

It belongs to the class-II pyridoxal-phosphate-dependent aminotransferase family. Histidinol-phosphate aminotransferase subfamily. As to quaternary structure, homodimer. The cofactor is pyridoxal 5'-phosphate.

The enzyme catalyses L-histidinol phosphate + 2-oxoglutarate = 3-(imidazol-4-yl)-2-oxopropyl phosphate + L-glutamate. It functions in the pathway amino-acid biosynthesis; L-histidine biosynthesis; L-histidine from 5-phospho-alpha-D-ribose 1-diphosphate: step 7/9. The polypeptide is Histidinol-phosphate aminotransferase (Desulfitobacterium hafniense (strain DSM 10664 / DCB-2)).